A 637-amino-acid polypeptide reads, in one-letter code: Proton myo-inositol cotransporter (637 aa).

The Cytoplasmic segment spans residues 1 to 65; sequence MSRKASEDVE…AARRQFQRDE (65 aa). Phosphoserine is present on serine 6. Positions 16-38 are disordered; it reads LSSLMGERRRRQPEPGAPGGERS. A phosphoserine mark is found at serine 44 and serine 47. The chain crosses the membrane as a helical span at residues 66 to 86; the sequence is TPAFVYAAAAFSALGGFLFGY. At 87 to 114 the chain is on the extracellular side; that stretch reads DTGVVSGAMLLLRRQMRLGAMWQELLVS. The helical transmembrane segment at 115 to 135 threads the bilayer; sequence GAVGAAAVAALAGGALNGALG. The Cytoplasmic segment spans residues 136 to 137; the sequence is RR. A helical transmembrane segment spans residues 138–158; that stretch reads SAILLASALCTVGSAVLAAAA. The Extracellular segment spans residues 159-167; sequence NKETLLAGR. A helical membrane pass occupies residues 168–188; it reads LVVGLGIGIASMTVPVYIAEV. The Cytoplasmic portion of the chain corresponds to 189 to 201; sequence SPPNLRGRLVTIN. Residues 202–222 traverse the membrane as a helical segment; it reads TLFITGGQFFASVVDGAFSYL. Topologically, residues 223-228 are extracellular; that stretch reads QKDGWR. A helical membrane pass occupies residues 229 to 249; it reads YMLGLAAIPAVIQFLGFLFLP. Residues 250–313 lie on the Cytoplasmic side of the membrane; the sequence is ESPRWLIQKG…RMLSYPPTRR (64 aa). The helical transmembrane segment at 314 to 334 threads the bilayer; that stretch reads ALAVGCGLQMFQQLSGINTIM. Topologically, residues 335 to 352 are extracellular; the sequence is YYSATILQMSGVEDDRLA. The chain crosses the membrane as a helical span at residues 353-373; sequence IWLASITAFTNFIFTLVGVWL. Over 374-382 the chain is Cytoplasmic; it reads VEKVGRRKL. A helical membrane pass occupies residues 383-403; the sequence is TFGSLAGTTVALTILALGFLL. Residues 404-497 lie on the Extracellular side of the membrane; it reads SAQVSPRVTF…SFCPTPYSWT (94 aa). 3 N-linked (GlcNAc...) asparagine glycosylation sites follow: asparagine 422, asparagine 447, and asparagine 474. The chain crosses the membrane as a helical span at residues 498–518; the sequence is ALVGLVLYLVFFAPGMGPMPW. At 519–538 the chain is on the cytoplasmic side; it reads TVNSEIYPLWARSTGNACSA. A helical membrane pass occupies residues 539-559; sequence GINWIFNVLVSLTFLHTAEYL. At 560–562 the chain is on the extracellular side; it reads TYY. A helical membrane pass occupies residues 563–583; that stretch reads GAFFLYAGFAAVGLLFVYGCL. The Cytoplasmic portion of the chain corresponds to 584-637; that stretch reads PETKGKKLEEIESLFDHRLCTCGTADSDEGRYIEYIRVKGSNYHLSDNDASDVE. Residues serine 629 and serine 634 each carry the phosphoserine modification.

It belongs to the major facilitator superfamily. Sugar transporter (TC 2.A.1.1) family.

The protein localises to the cell membrane. It carries out the reaction myo-inositol(out) + H(+)(out) = myo-inositol(in) + H(+)(in). Functionally, h(+)-myo-inositol cotransporter. Can also transport related stereoisomers. The protein is Proton myo-inositol cotransporter of Rattus norvegicus (Rat).